We begin with the raw amino-acid sequence, 271 residues long: Shikimate dehydrogenase (NADP(+)) (271 aa).

Shikimate contacts are provided by residues 14 to 16 and Thr61; that span reads SQS. Lys65 functions as the Proton acceptor in the catalytic mechanism. The shikimate site is built by Asn86 and Asp101. NADP(+)-binding positions include 125-129, 148-153, and Met212; these read GAGGA and NRTHAR. A shikimate-binding site is contributed by Tyr214. Residue Gly236 participates in NADP(+) binding.

Belongs to the shikimate dehydrogenase family. As to quaternary structure, homodimer.

The catalysed reaction is shikimate + NADP(+) = 3-dehydroshikimate + NADPH + H(+). It functions in the pathway metabolic intermediate biosynthesis; chorismate biosynthesis; chorismate from D-erythrose 4-phosphate and phosphoenolpyruvate: step 4/7. Functionally, involved in the biosynthesis of the chorismate, which leads to the biosynthesis of aromatic amino acids. Catalyzes the reversible NADPH linked reduction of 3-dehydroshikimate (DHSA) to yield shikimate (SA). The protein is Shikimate dehydrogenase (NADP(+)) of Edwardsiella ictaluri (strain 93-146).